The primary structure comprises 2009 residues: Protein Daple (2009 aa).

A Calponin-homology (CH) domain is found at 11 to 131; that stretch reads LFLQSPLVTW…KVLLLVLGCA (121 aa). The disordered stretch occupies residues 221 to 251; that stretch reads QTQQPPSPGKFSSPDSTPSPTSSLSSEDKQH. Phosphoserine occurs at positions 227 and 239. The segment covering 232-245 has biased composition (low complexity); it reads SSPDSTPSPTSSLS. Coiled-coil stretches lie at residues 247 to 425 and 456 to 1008; these read EDKQ…QKQS and ELNE…TQEG. S486 is modified (phosphoserine). Residues 1002 to 1036 form a disordered region; the sequence is LRQTQEGGDKAQNALKRPPGKVTSHQEKEAWEPSH. The span at 1025-1036 shows a compositional bias: basic and acidic residues; sequence SHQEKEAWEPSH. A coiled-coil region spans residues 1190-1384; it reads HRNLELEHKE…LEEKIMDQYK (195 aa). The span at 1410-1419 shows a compositional bias: basic and acidic residues; it reads KEGSRERLKS. Disordered regions lie at residues 1410–1716 and 1757–1787; these read KEGS…GAKM and GMPSRQVQPPQSLSLGRPRQTTMTQNCHMPV. The segment covering 1430–1439 has biased composition (low complexity); it reads PSDPASPSPS. S1435 carries the post-translational modification Phosphoserine. Over residues 1440 to 1449 the composition is skewed to polar residues; the sequence is QALRSQTENP. Low complexity-rich tracts occupy residues 1510 to 1524 and 1562 to 1581; these read TFSTSATTAALSSST and NSLESSRNASSNSSPLSLKG. S1592 is modified (phosphoserine). Positions 1652 to 1683 match the GBA motif; the sequence is HSASPSSEMVTLEEFLEESNRGGSPTHDTPSC. The span at 1681-1697 shows a compositional bias: basic and acidic residues; it reads PSCRDDLLSDYFRKAHD. The span at 1761-1783 shows a compositional bias: polar residues; the sequence is RQVQPPQSLSLGRPRQTTMTQNC. S1798 carries the post-translational modification Phosphoserine. Residues 1808-2009 are disordered; sequence SGPEACRPES…QTVWYEYGCV (202 aa). Positions 1866 to 1883 are enriched in basic and acidic residues; the sequence is RPLDTRRFSLAPPKEERL. Residues 1898–1911 show a composition bias toward polar residues; the sequence is GCSSGSNPQIQHFS. Over residues 1943-1954 the composition is skewed to gly residues; sequence TSEGDGGPGHGY. Residues 1981–1991 are compositionally biased toward polar residues; the sequence is SQGSSSKSTPA. Residues 2006–2009 carry the PDZ-binding motif; the sequence is YGCV. Residues 2007 to 2009 form a DVL1-binding region; that stretch reads GCV.

It belongs to the CCDC88 family. Homooligomer. Interacts with DVL1 (via PDZ domain); dissociates following initiation of non-canonical Wnt signaling. Interacts (via C-terminus) with ligand-activated Wnt receptor FZD7; competes with DVL1 for binding to FZD7 and displaces DVL1 from ligand-activated FZD7. Interacts (via GBA motif) with guanine nucleotide-binding protein G(i) alpha subunits GNAI1, GNAI2 and GNAI3 (inactive GDP-bound form); interacts with higher affinity with GNAI1 and GNAI3 than with GNAI2 and interaction leads to G(i) alpha subunit activation. Does not interact with GNAO1.

Its subcellular location is the cytoplasm. It is found in the cell junction. Functionally, required for activation of guanine nucleotide-binding proteins (G-proteins) during non-canonical Wnt signaling. Binds to ligand-activated Wnt receptor FZD7, displacing DVL1 from the FZD7 receptor and leading to inhibition of canonical Wnt signaling. Acts as a non-receptor guanine nucleotide exchange factor by also binding to guanine nucleotide-binding protein G(i) alpha (Gi-alpha) subunits, leading to their activation. Binding to Gi-alpha subunits displaces the beta and gamma subunits from the heterotrimeric G-protein complex, triggering non-canonical Wnt responses such as activation of RAC1 and PI3K-AKT signaling. Promotes apical constriction of cells via ARHGEF18. This Mus musculus (Mouse) protein is Protein Daple (Ccdc88c).